The primary structure comprises 252 residues: Imidazole glycerol phosphate synthase subunit HisF (252 aa).

Residues Asp-11 and Asp-130 contribute to the active site.

It belongs to the HisA/HisF family. In terms of assembly, heterodimer of HisH and HisF.

The protein resides in the cytoplasm. The catalysed reaction is 5-[(5-phospho-1-deoxy-D-ribulos-1-ylimino)methylamino]-1-(5-phospho-beta-D-ribosyl)imidazole-4-carboxamide + L-glutamine = D-erythro-1-(imidazol-4-yl)glycerol 3-phosphate + 5-amino-1-(5-phospho-beta-D-ribosyl)imidazole-4-carboxamide + L-glutamate + H(+). Its pathway is amino-acid biosynthesis; L-histidine biosynthesis; L-histidine from 5-phospho-alpha-D-ribose 1-diphosphate: step 5/9. Functionally, IGPS catalyzes the conversion of PRFAR and glutamine to IGP, AICAR and glutamate. The HisF subunit catalyzes the cyclization activity that produces IGP and AICAR from PRFAR using the ammonia provided by the HisH subunit. The protein is Imidazole glycerol phosphate synthase subunit HisF of Acinetobacter baumannii (strain AB307-0294).